The sequence spans 592 residues: Cytosolic purine 5'-nucleotidase (592 aa).

Positions 1–15 (MAENNNNNNNNNNNN) are enriched in low complexity. The interval 1–37 (MAENNNNNNNNNNNNVSTPPHQKPHLTTGLRTSSSGL) is disordered. Asp-122 acts as the Nucleophile in catalysis. Asp-122 and Asp-124 together coordinate IMP. Residues Asp-122 and Asp-124 each contribute to the Mg(2+) site. Catalysis depends on Asp-124, which acts as the Proton donor. Asn-226 is a binding site for ATP. Residues 252–273 (LTEEVADEQQQMNSPPLSSLGS) are disordered. Polar residues predominate over residues 259-273 (EQQQMNSPPLSSLGS). Positions 299, 303, 312, 347, 348, 349, and 385 each coordinate IMP. A Mg(2+)-binding site is contributed by Asp-444. 2 residues coordinate ATP: Gln-547 and Arg-550.

It belongs to the 5'(3')-deoxyribonucleotidase family. In terms of assembly, homotetramer. The cofactor is Mg(2+).

The protein localises to the cytoplasm. It is found in the cytosol. The catalysed reaction is a ribonucleoside 5'-phosphate + H2O = a ribonucleoside + phosphate. The enzyme catalyses a 2'-deoxyribonucleoside + a ribonucleoside 5'-phosphate = a ribonucleoside + a 2'-deoxyribonucleoside 5'-phosphate. Its function is as follows. Broad specificity cytosolic 5'-nucleotidase that catalyzes the dephosphorylation of 6-hydroxypurine nucleoside 5'-monophosphates. In addition, possesses a phosphotransferase activity by which it can transfer a phosphate from a donor nucleoside monophosphate to an acceptor nucleoside. Through these activities regulates the purine nucleoside/nucleotide pools within the cell. This is Cytosolic purine 5'-nucleotidase (nt5c2) from Dictyostelium discoideum (Social amoeba).